We begin with the raw amino-acid sequence, 190 residues long: Probable chorismate pyruvate-lyase (190 aa).

Substrate contacts are provided by R77, L115, and E174.

This sequence belongs to the UbiC family.

It localises to the cytoplasm. The enzyme catalyses chorismate = 4-hydroxybenzoate + pyruvate. The protein operates within cofactor biosynthesis; ubiquinone biosynthesis. Its function is as follows. Removes the pyruvyl group from chorismate, with concomitant aromatization of the ring, to provide 4-hydroxybenzoate (4HB) for the ubiquinone pathway. The protein is Probable chorismate pyruvate-lyase of Shewanella sp. (strain MR-4).